The primary structure comprises 162 residues: Transcription elongation factor GreA (162 aa).

Positions 45-75 (ENAEYEAAREKQAFIEGRIKELEDMAARAEI) form a coiled coil.

It belongs to the GreA/GreB family.

Functionally, necessary for efficient RNA polymerase transcription elongation past template-encoded arresting sites. The arresting sites in DNA have the property of trapping a certain fraction of elongating RNA polymerases that pass through, resulting in locked ternary complexes. Cleavage of the nascent transcript by cleavage factors such as GreA or GreB allows the resumption of elongation from the new 3'terminus. GreA releases sequences of 2 to 3 nucleotides. This chain is Transcription elongation factor GreA, found in Rickettsia canadensis (strain McKiel).